Consider the following 261-residue polypeptide: UPF0328 protein ECU06_0100 (261 aa).

This sequence belongs to the UPF0328 family.

The sequence is that of UPF0328 protein ECU06_0100 from Encephalitozoon cuniculi (strain GB-M1) (Microsporidian parasite).